The primary structure comprises 180 residues: MNIKQIVQGVGTQLRSLAMVFSHSFRPRDTLCYPEEKVPLAPRYRGRIVLTRDPDGDERCVACNLCAVACPVGCISLQKAERVDGRWYPEFFRINFSRCIFCGLCEEACPTTAIQLTPDFEMGEYRRQDLVYEKEDLLISGPGKYPDYNFYRVSGMSIDGKPKGSAQKEAAPIDVKSILP.

4Fe-4S ferredoxin-type domains are found at residues 48-80 (IVLTRDPDGDERCVACNLCAVACPVGCISLQKA) and 90-119 (EFFRINFSRCIFCGLCEEACPTTAIQLTPD). 8 residues coordinate [4Fe-4S] cluster: Cys60, Cys63, Cys66, Cys70, Cys99, Cys102, Cys105, and Cys109. The disordered stretch occupies residues 160–180 (GKPKGSAQKEAAPIDVKSILP).

Belongs to the complex I 23 kDa subunit family. NDH-1 is composed of 14 different subunits. Subunits NuoA, H, J, K, L, M, N constitute the membrane sector of the complex. The cofactor is [4Fe-4S] cluster.

The protein resides in the cell inner membrane. It catalyses the reaction a quinone + NADH + 5 H(+)(in) = a quinol + NAD(+) + 4 H(+)(out). Its function is as follows. NDH-1 shuttles electrons from NADH, via FMN and iron-sulfur (Fe-S) centers, to quinones in the respiratory chain. The immediate electron acceptor for the enzyme in this species is believed to be ubiquinone. Couples the redox reaction to proton translocation (for every two electrons transferred, four hydrogen ions are translocated across the cytoplasmic membrane), and thus conserves the redox energy in a proton gradient. The sequence is that of NADH-quinone oxidoreductase subunit I from Tolumonas auensis (strain DSM 9187 / NBRC 110442 / TA 4).